Reading from the N-terminus, the 357-residue chain is UDP-N-acetylglucosamine--N-acetylmuramyl-(pentapeptide) pyrophosphoryl-undecaprenol N-acetylglucosamine transferase (357 aa).

Residues 14 to 16, asparagine 126, arginine 162, serine 190, isoleucine 246, 265 to 270, and glutamine 290 contribute to the UDP-N-acetyl-alpha-D-glucosamine site; these read TGG and ALTVCE.

Belongs to the glycosyltransferase 28 family. MurG subfamily.

The protein resides in the cell inner membrane. It catalyses the reaction di-trans,octa-cis-undecaprenyl diphospho-N-acetyl-alpha-D-muramoyl-L-alanyl-D-glutamyl-meso-2,6-diaminopimeloyl-D-alanyl-D-alanine + UDP-N-acetyl-alpha-D-glucosamine = di-trans,octa-cis-undecaprenyl diphospho-[N-acetyl-alpha-D-glucosaminyl-(1-&gt;4)]-N-acetyl-alpha-D-muramoyl-L-alanyl-D-glutamyl-meso-2,6-diaminopimeloyl-D-alanyl-D-alanine + UDP + H(+). Its pathway is cell wall biogenesis; peptidoglycan biosynthesis. Functionally, cell wall formation. Catalyzes the transfer of a GlcNAc subunit on undecaprenyl-pyrophosphoryl-MurNAc-pentapeptide (lipid intermediate I) to form undecaprenyl-pyrophosphoryl-MurNAc-(pentapeptide)GlcNAc (lipid intermediate II). In Histophilus somni (strain 129Pt) (Haemophilus somnus), this protein is UDP-N-acetylglucosamine--N-acetylmuramyl-(pentapeptide) pyrophosphoryl-undecaprenol N-acetylglucosamine transferase.